The primary structure comprises 149 residues: Putative pre-16S rRNA nuclease (149 aa).

Belongs to the YqgF nuclease family.

The protein resides in the cytoplasm. In terms of biological role, could be a nuclease involved in processing of the 5'-end of pre-16S rRNA. In Cupriavidus metallidurans (strain ATCC 43123 / DSM 2839 / NBRC 102507 / CH34) (Ralstonia metallidurans), this protein is Putative pre-16S rRNA nuclease.